The following is a 38-amino-acid chain: Photosystem I reaction center subunit IX (38 aa).

The chain crosses the membrane as a helical span at residues 6 to 26; that stretch reads YLSTAPVVATLWLFLTAGILI.

Belongs to the PsaJ family.

It is found in the plastid. It localises to the chloroplast thylakoid membrane. In terms of biological role, may help in the organization of the PsaE and PsaF subunits. The polypeptide is Photosystem I reaction center subunit IX (Cyanidioschyzon merolae (strain NIES-3377 / 10D) (Unicellular red alga)).